We begin with the raw amino-acid sequence, 188 residues long: Preprocaerulein type-1 (188 aa).

The first 26 residues, 1–26, serve as a signal peptide directing secretion; the sequence is MFKGILLCVLFAVLSANPLSQPEGFA. A propeptide spanning residues 27–170 is cleaved from the precursor; it reads DEERDVRGLA…ANDERRFADG (144 aa). The interval 152–188 is disordered; it reads LGGSPQQREANDERRFADGQQDYTGWMDFGRRNGEDD. The residue at position 174 (tyrosine 174) is a Sulfotyrosine. A Phenylalanine amide modification is found at phenylalanine 180. A propeptide spanning residues 184–188 is cleaved from the precursor; sequence NGEDD.

Belongs to the gastrin/cholecystokinin family. Expressed by the skin glands.

The protein localises to the secreted. Its function is as follows. The pharmacological activities of caerulein are quite similar to the physiological activities of gastrin and related peptides. In Xenopus laevis (African clawed frog), this protein is Preprocaerulein type-1.